The following is a 344-amino-acid chain: tRNA N6-adenosine threonylcarbamoyltransferase (344 aa).

The Fe cation site is built by His-113 and His-117. Substrate is bound by residues 135–139 (LVSGG), Asp-169, Gly-182, Asp-186, and Asn-278. A Fe cation-binding site is contributed by Asp-306. Positions 325–344 (ESPISVGTDPSLSVETPQVF) are disordered. The segment covering 326 to 344 (SPISVGTDPSLSVETPQVF) has biased composition (polar residues).

It belongs to the KAE1 / TsaD family. The cofactor is Fe(2+).

The protein resides in the cytoplasm. It carries out the reaction L-threonylcarbamoyladenylate + adenosine(37) in tRNA = N(6)-L-threonylcarbamoyladenosine(37) in tRNA + AMP + H(+). In terms of biological role, required for the formation of a threonylcarbamoyl group on adenosine at position 37 (t(6)A37) in tRNAs that read codons beginning with adenine. Is involved in the transfer of the threonylcarbamoyl moiety of threonylcarbamoyl-AMP (TC-AMP) to the N6 group of A37, together with TsaE and TsaB. TsaD likely plays a direct catalytic role in this reaction. The chain is tRNA N6-adenosine threonylcarbamoyltransferase from Corynebacterium glutamicum (strain ATCC 13032 / DSM 20300 / JCM 1318 / BCRC 11384 / CCUG 27702 / LMG 3730 / NBRC 12168 / NCIMB 10025 / NRRL B-2784 / 534).